A 1055-amino-acid chain; its full sequence is Protein SUPPRESSOR OF QUENCHING 1, chloroplastic (1055 aa).

The N-terminal 56 residues, 1–56, are a transit peptide targeting the chloroplast; it reads MALKLTSPPSVFSQSRRLSSSSLIPIRSKSTFTGFRSRTGVYLSKTTALQSSTKLS. N-acetylvaline is present on Val-57. The Stromal segment spans residues 59–327; it reads AESPAATIAT…FQGSRRDILR (269 aa). Catalysis depends on Asp-80, which acts as the Nucleophile. Residues Asp-80 and Asp-82 each contribute to the Mg(2+) site. Residue Asp-80 coordinates substrate. Asp-82 functions as the Proton donor in the catalytic mechanism. Residues Glu-89, 118-122, 141-144, and 183-189 contribute to the substrate site; these read TGEAK, AKER, and SSADRIK. Asp-242 is a binding site for Mg(2+). The chain crosses the membrane as a helical span at residues 328–345; that stretch reads YGSLGIALSCVYFAATNW. Residues 346–1055 lie on the Lumenal side of the membrane; that stretch reads KAMQYASPKA…AGGLQLQGTR (710 aa). The region spanning 359–536 is the Thioredoxin domain; sequence ALVGAKSPSF…LDDVVAAALT (178 aa). Residues Cys-431 and Cys-434 are joined by a disulfide bond. 5 NHL repeats span residues 565–597, 611–647, 673–712, 802–832, and 854–887; these read PLKF…TDLE, GFQD…NHAL, GRKG…YSVL, LQHP…LDPV, and GAQL…IDLN.

It in the N-terminal section; belongs to the HAD-like hydrolase superfamily. This sequence in the C-terminal section; belongs to the thioredoxin family. The cofactor is Mg(2+).

The protein resides in the plastid. It localises to the chloroplast thylakoid membrane. Required to maintain light harvesting efficiency, especially during nonphotochemical quenching (NPQ) recovery, via the regulation of chlorophyll excited-state lifetime probably by preventing the formation of a slowly reversible form of antenna quenching. This Arabidopsis thaliana (Mouse-ear cress) protein is Protein SUPPRESSOR OF QUENCHING 1, chloroplastic.